Reading from the N-terminus, the 188-residue chain is ATP-dependent protease subunit HslV (188 aa).

Residue T7 is part of the active site. 3 residues coordinate Na(+): G162, C165, and S168.

It belongs to the peptidase T1B family. HslV subfamily. A double ring-shaped homohexamer of HslV is capped on each side by a ring-shaped HslU homohexamer. The assembly of the HslU/HslV complex is dependent on binding of ATP.

The protein localises to the cytoplasm. It catalyses the reaction ATP-dependent cleavage of peptide bonds with broad specificity.. Its activity is regulated as follows. Allosterically activated by HslU binding. Its function is as follows. Protease subunit of a proteasome-like degradation complex believed to be a general protein degrading machinery. The sequence is that of ATP-dependent protease subunit HslV from Thiobacillus denitrificans (strain ATCC 25259 / T1).